The primary structure comprises 196 residues: dTDP-4-dehydro-6-deoxyglucose 3-epimerase (196 aa).

Substrate is bound by residues arginine 21, glutamate 26, glutamine 45–asparagine 47, and arginine 57. Histidine 60 serves as the catalytic Proton acceptor. Substrate is bound by residues lysine 70 and arginine 117. The active-site Proton donor is tyrosine 130. Residues glutamate 141 and arginine 166 each coordinate substrate.

This sequence belongs to the dTDP-4-dehydrorhamnose 3,5-epimerase family. Homodimer.

It catalyses the reaction dTDP-4-dehydro-6-deoxy-alpha-D-glucose = dTDP-4-dehydro-6-deoxy-alpha-D-allose. The protein operates within antibiotic biosynthesis. Involved in the biosynthesis of dTDP-6-deoxy-D-allose, an intermediate in the biosynthesis of mycinose, which is one of the two unusual sugars attached to the 16-membered macrolactone ring of the aglycone antibiotic chalcomycin. Catalyzes the conversion of dTDP-4-oxo-6-deoxyglucose to dTDP-4-oxo-6-deoxyallose, via a C-3 epimerization. In Streptomyces bikiniensis, this protein is dTDP-4-dehydro-6-deoxyglucose 3-epimerase.